We begin with the raw amino-acid sequence, 31 residues long: Conotoxin (31 aa).

Belongs to the conotoxin S superfamily. Contains 5 disulfide bonds. Expressed by the venom duct.

It localises to the secreted. The polypeptide is Conotoxin (Conus striatus (Striated cone)).